The sequence spans 298 residues: MSADSSDAAHPSGLARVPDFLRLTRLDRPIGTWLLMWPTLWALWLAAEGIPERGTLLIFVIGVYVMRAAGCVVNDYADRHFDGHVKRTRDRPLATGRITEKEAKVLFAGLVIIAFGLVCLTNLPTVLLSFAALALAATYPFMKRYTHFPQVVLGAAFSWGIPMAFMAIQRQVPLEAWLLLAANVAWTVAYDTEYAMVDRDDDLKVGIKSTAVLFGRADRLMIGLLQALTLLLLAWVGLRLALGGFFWLGLAAMGAIFVFQHRLIRHRERDHCFRAFLNNHWAGLVVFAGIALSLWPML.

A run of 7 helical transmembrane segments spans residues 30–50, 54–74, 105–125, 148–168, 218–238, 240–260, and 275–295; these read IGTWLLMWPTLWALWLAAEGI, GTLLIFVIGVYVMRAAGCVVN, VLFAGLVIIAFGLVCLTNLPT, FPQVVLGAAFSWGIPMAFMAI, DRLMIGLLQALTLLLLAWVGL, LALGGFFWLGLAAMGAIFVFQ, and AFLNNHWAGLVVFAGIALSLW.

Belongs to the UbiA prenyltransferase family. Requires Mg(2+) as cofactor.

It localises to the cell inner membrane. The enzyme catalyses all-trans-octaprenyl diphosphate + 4-hydroxybenzoate = 4-hydroxy-3-(all-trans-octaprenyl)benzoate + diphosphate. Its pathway is cofactor biosynthesis; ubiquinone biosynthesis. Functionally, catalyzes the prenylation of para-hydroxybenzoate (PHB) with an all-trans polyprenyl group. Mediates the second step in the final reaction sequence of ubiquinone-8 (UQ-8) biosynthesis, which is the condensation of the polyisoprenoid side chain with PHB, generating the first membrane-bound Q intermediate 3-octaprenyl-4-hydroxybenzoate. The protein is 4-hydroxybenzoate octaprenyltransferase of Chromohalobacter salexigens (strain ATCC BAA-138 / DSM 3043 / CIP 106854 / NCIMB 13768 / 1H11).